A 144-amino-acid polypeptide reads, in one-letter code: Nucleoside diphosphate kinase (144 aa).

ATP contacts are provided by lysine 11, phenylalanine 59, arginine 87, threonine 93, arginine 104, and asparagine 114. Histidine 117 acts as the Pros-phosphohistidine intermediate in catalysis.

It belongs to the NDK family. As to quaternary structure, homotetramer. Requires Mg(2+) as cofactor.

The protein localises to the cytoplasm. It catalyses the reaction a 2'-deoxyribonucleoside 5'-diphosphate + ATP = a 2'-deoxyribonucleoside 5'-triphosphate + ADP. It carries out the reaction a ribonucleoside 5'-diphosphate + ATP = a ribonucleoside 5'-triphosphate + ADP. Functionally, major role in the synthesis of nucleoside triphosphates other than ATP. The ATP gamma phosphate is transferred to the NDP beta phosphate via a ping-pong mechanism, using a phosphorylated active-site intermediate. This chain is Nucleoside diphosphate kinase, found in Sorangium cellulosum (strain So ce56) (Polyangium cellulosum (strain So ce56)).